Here is a 488-residue protein sequence, read N- to C-terminus: MKNEEEEPLSPMARVFQSPDIDLCAIINIGFKTKINPDVVLDALKQNVYKHPRFSSKLSENGEKWIETEVNVEDHVIVPYIDPEDICEGGQSFVDDYISRLTLIPLDRSRPLWDIHILNVKTSYAEAVGVIRFNHALADGMSFISLVLACTHKTSNPDMLSTAIPSVKRRSTVSHSLKKTGWFLTAIFTIGSTMRLIWNTLVDMFLLFATMLFLKDTKTPLKGGANVRSNPKTFYHRNISLDDIKLIKNAMNMTINDVLLGITQAALSSYLNRRYEHENNNEEDGVLTSYTNNLPDRIRFRAGCTVNLRSDIGFKPLAEMMVKDSKCRWGNYFSFIILPLSISLETDPLVYLNKSKAMMARTKHSYQAALTYFLIKISLKVLGAKATTSLFNQHLMNITTCVSNVMGPMEEISFNGHPVAYISPSSYGHSHALLIHYTSYAGEMTITITVDPTVIPDPHKICDDMEESLKTMKAVLWERGLLKEAYKV.

The Cytoplasmic portion of the chain corresponds to M1 to R195. The active-site Proton acceptor is the H135. Residues L196 to L214 traverse the membrane as a helical segment. The Lumenal portion of the chain corresponds to K215 to V488. Residues N238, N252, N353, and N397 are each glycosylated (N-linked (GlcNAc...) asparagine).

In the N-terminal section; belongs to the long-chain O-acyltransferase family. In terms of tissue distribution, mostly expressed in flowers and siliques and at low levels in stems.

The protein resides in the cell membrane. It localises to the endoplasmic reticulum membrane. The enzyme catalyses an acyl-CoA + a 1,2-diacyl-sn-glycerol = a triacyl-sn-glycerol + CoA. It catalyses the reaction a long chain fatty alcohol + a fatty acyl-CoA = a wax ester + CoA. It functions in the pathway glycerolipid metabolism; triacylglycerol biosynthesis. The protein operates within lipid metabolism. Functionally, bifunctional wax ester synthase/diacylglycerol acyltransferase. Involved in cuticular wax biosynthesis. In Arabidopsis thaliana (Mouse-ear cress), this protein is Wax ester synthase/diacylglycerol acyltransferase 8.